A 113-amino-acid polypeptide reads, in one-letter code: uncharacterized protein (113 aa).

One can recognise a Cupin type-2 domain in the interval 41 to 88 (DWHHHPDSDELFIVLEGELLIDFKDKETAVLKANDSLLIPKGTVHRTR).

It belongs to the SchB/CurC family.

This is an uncharacterized protein from Bacillus subtilis (strain 168).